Consider the following 342-residue polypeptide: N-acetyl-gamma-glutamyl-phosphate reductase (342 aa).

C148 is an active-site residue.

It belongs to the NAGSA dehydrogenase family. Type 1 subfamily.

Its subcellular location is the cytoplasm. It catalyses the reaction N-acetyl-L-glutamate 5-semialdehyde + phosphate + NADP(+) = N-acetyl-L-glutamyl 5-phosphate + NADPH + H(+). It participates in amino-acid biosynthesis; L-arginine biosynthesis; N(2)-acetyl-L-ornithine from L-glutamate: step 3/4. Catalyzes the NADPH-dependent reduction of N-acetyl-5-glutamyl phosphate to yield N-acetyl-L-glutamate 5-semialdehyde. This Methanococcus vannielii (strain ATCC 35089 / DSM 1224 / JCM 13029 / OCM 148 / SB) protein is N-acetyl-gamma-glutamyl-phosphate reductase.